Here is a 598-residue protein sequence, read N- to C-terminus: DNA ligase (598 aa).

Aspartate 258 is a binding site for ATP. Catalysis depends on lysine 260, which acts as the N6-AMP-lysine intermediate. ATP-binding residues include arginine 265, arginine 280, glutamate 310, phenylalanine 350, arginine 427, and lysine 433.

Belongs to the ATP-dependent DNA ligase family. Mg(2+) serves as cofactor.

It catalyses the reaction ATP + (deoxyribonucleotide)n-3'-hydroxyl + 5'-phospho-(deoxyribonucleotide)m = (deoxyribonucleotide)n+m + AMP + diphosphate.. In terms of biological role, DNA ligase that seals nicks in double-stranded DNA during DNA replication, DNA recombination and DNA repair. This chain is DNA ligase, found in Sulfolobus acidocaldarius (strain ATCC 33909 / DSM 639 / JCM 8929 / NBRC 15157 / NCIMB 11770).